Consider the following 594-residue polypeptide: Probable methylenetetrahydrofolate reductase (NADH) (594 aa).

Glu-21 functions as the Proton donor/acceptor in the catalytic mechanism. NAD(+) is bound by residues 21 to 26 (EYFPPK) and 52 to 53 (TW). Residues 52–53 (TW), His-81, 111–113 (RGD), Tyr-153, 157–160 (HPDA), Asp-175, and Lys-182 contribute to the FAD site. A substrate-binding site is contributed by Asp-113. The substrate site is built by Gln-193 and Tyr-285.

This sequence belongs to the methylenetetrahydrofolate reductase family. In terms of assembly, homodimer. FAD serves as cofactor.

The catalysed reaction is (6S)-5-methyl-5,6,7,8-tetrahydrofolate + NAD(+) = (6R)-5,10-methylene-5,6,7,8-tetrahydrofolate + NADH + H(+). It participates in one-carbon metabolism; tetrahydrofolate interconversion. With respect to regulation, plant MTHFRs strongly prefer NADH over NADPH. Not inhibited by methionine or S-adenosylmethionine. Its function is as follows. The probable reversibility of the MTHFR reaction in plants suggests that they can metabolize the methyl group of 5,10-methylenetetrahydrofolate to serine, sugars and starch. The polypeptide is Probable methylenetetrahydrofolate reductase (NADH) (Oryza sativa subsp. japonica (Rice)).